A 289-amino-acid chain; its full sequence is Pantoate kinase (289 aa).

The protein belongs to the GHMP kinase family. PoK subfamily.

The catalysed reaction is (R)-pantoate + ATP = (R)-4-phosphopantoate + ADP + H(+). Its pathway is cofactor biosynthesis; coenzyme A biosynthesis. Phosphorylates (R)-pantoate to form (R)-4-phosphopantoate in the CoA biosynthesis pathway. ATP is the best phosphate donor. Can be replaced with UTP, with lower efficiency. In Methanospirillum hungatei JF-1 (strain ATCC 27890 / DSM 864 / NBRC 100397 / JF-1), this protein is Pantoate kinase.